The chain runs to 188 residues: Potassium-transporting ATPase KdpC subunit (188 aa).

Residues 13–33 (MTAIFWIGCGLAYPLIFTGFA) traverse the membrane as a helical segment.

This sequence belongs to the KdpC family. The system is composed of three essential subunits: KdpA, KdpB and KdpC.

It is found in the cell inner membrane. Part of the high-affinity ATP-driven potassium transport (or Kdp) system, which catalyzes the hydrolysis of ATP coupled with the electrogenic transport of potassium into the cytoplasm. This subunit acts as a catalytic chaperone that increases the ATP-binding affinity of the ATP-hydrolyzing subunit KdpB by the formation of a transient KdpB/KdpC/ATP ternary complex. The chain is Potassium-transporting ATPase KdpC subunit from Gloeobacter violaceus (strain ATCC 29082 / PCC 7421).